A 1093-amino-acid polypeptide reads, in one-letter code: MPRRNDIRKILVIGSGPIVIGQSAEFDYSGTQACKALKAEGYEVVLVNSNPATIMTDPELADRTYIEPLTVKYLDEILRIEAEMLAASGSNGKFAVLPTVGGQTALNLAVELADAGILDKYGVELIGAKLDAIKKAEDRLLFKDAMTRIGLDVPRSALVNNIRDGLEFATKIGFPVIIRPSFTLGGSGGGIGYNREELMEILARGLDLSPVHECLIEESVLGWKEYELEVMRDLADNVIIICSIENMDPMGVHTGDSITVAPAQTLTDREYQAMRDAALLVMREIGVETGGSNVQFAVNPQTGRMTVIEMNPRVSRSSALASKATGFPIAKIAAKLAVGYTLDEIPNDITRMTPACFEPTIDYVVTKIPKWQFEKFPGADENLGPQMKSVGEVMAIGRTFKESLMKALRSLETGKRVGAEVLEPRRLTQRLVTPQPERLNYVRFAFRQGLSVREVARMTSMDPWFLYQIKEITDTIAAIGDATFDNVSPEQLRKAKRMGISDERLAEVWGLTGNEGVAKVRELRQGHGIRPIYKLVDTCAAEFESATPYFYSSYEEEDEAPQTDKRKVIILGSGPNRIGQGIEFDYCCCHAAFALKEDGFEAIMVNCNPETVSTDYDTSDRLYFEPLTLEDVLAIYEHETANGADAGMIVQFGGQTPLNLALRLKQAGVKIIGTSPESIDLAEDRKSFGKLLEQLQIPQPQGATATSVEEALASAERIGYPVLVRPSYVLGGRAMVIAYDAAAVSHYMKEAVEYSQERPILIDHFLEDAVEVDVDALCDGTDVVIAGIMQHIEEAGIHSGDSSCVLPAVDLAPQVLDTIRDYTRKLALSLKVIGLVNLQFAIQRDKVYVIEVNPRASRTVPYVSKATGVPLAKIASRLMTGRKLSEFLPENIASGKDLGTGAHYYVKSPVFPWNKFPGVDTVLGPEMKSTGEVMGVADNFGEAFAKAQLSAGLILPSSGTVFFSVNDHDKAALVPLAKQYIDLGFQIVATEGTAKVLHKAGIQAESVYKVKEGRPNIVDLIKGQRIQLIINTPRGQDTFFDEQAIRRAAVLQRIPTITTIAAARAAAEGIAASQRKHITVNPLQLLHAGHAVK.

The carboxyphosphate synthetic domain stretch occupies residues 1–412 (MPRRNDIRKI…SLMKALRSLE (412 aa)). Arginine 139, arginine 179, glycine 185, glycine 186, glutamate 218, valine 220, glutamate 225, glycine 251, valine 252, histidine 253, glutamine 295, and glutamate 309 together coordinate ATP. Residues 143–338 (KDAMTRIGLD…IAKIAAKLAV (196 aa)) enclose the ATP-grasp 1 domain. Residues glutamine 295, glutamate 309, and asparagine 311 each contribute to the Mg(2+) site. Positions 295, 309, and 311 each coordinate Mn(2+). An oligomerization domain region spans residues 413–560 (TGKRVGAEVL…YSSYEEEDEA (148 aa)). The interval 561–952 (PQTDKRKVII…AFAKAQLSAG (392 aa)) is carbamoyl phosphate synthetic domain. In terms of domain architecture, ATP-grasp 2 spans 689–880 (GKLLEQLQIP…LAKIASRLMT (192 aa)). Residues arginine 725, histidine 764, leucine 766, glutamate 771, glycine 796, isoleucine 797, histidine 798, serine 799, glutamine 839, and glutamate 851 each contribute to the ATP site. Glutamine 839, glutamate 851, and asparagine 853 together coordinate Mg(2+). 3 residues coordinate Mn(2+): glutamine 839, glutamate 851, and asparagine 853. The region spanning 953–1093 (LILPSSGTVF…QLLHAGHAVK (141 aa)) is the MGS-like domain. Residues 953-1093 (LILPSSGTVF…QLLHAGHAVK (141 aa)) are allosteric domain.

This sequence belongs to the CarB family. In terms of assembly, composed of two chains; the small (or glutamine) chain promotes the hydrolysis of glutamine to ammonia, which is used by the large (or ammonia) chain to synthesize carbamoyl phosphate. Tetramer of heterodimers (alpha,beta)4. Mg(2+) serves as cofactor. Mn(2+) is required as a cofactor.

It carries out the reaction hydrogencarbonate + L-glutamine + 2 ATP + H2O = carbamoyl phosphate + L-glutamate + 2 ADP + phosphate + 2 H(+). The catalysed reaction is hydrogencarbonate + NH4(+) + 2 ATP = carbamoyl phosphate + 2 ADP + phosphate + 2 H(+). Its pathway is amino-acid biosynthesis; L-arginine biosynthesis; carbamoyl phosphate from bicarbonate: step 1/1. It functions in the pathway pyrimidine metabolism; UMP biosynthesis via de novo pathway; (S)-dihydroorotate from bicarbonate: step 1/3. Functionally, large subunit of the glutamine-dependent carbamoyl phosphate synthetase (CPSase). CPSase catalyzes the formation of carbamoyl phosphate from the ammonia moiety of glutamine, carbonate, and phosphate donated by ATP, constituting the first step of 2 biosynthetic pathways, one leading to arginine and/or urea and the other to pyrimidine nucleotides. The large subunit (synthetase) binds the substrates ammonia (free or transferred from glutamine from the small subunit), hydrogencarbonate and ATP and carries out an ATP-coupled ligase reaction, activating hydrogencarbonate by forming carboxy phosphate which reacts with ammonia to form carbamoyl phosphate. The polypeptide is Carbamoyl phosphate synthase large chain (Acidobacterium capsulatum (strain ATCC 51196 / DSM 11244 / BCRC 80197 / JCM 7670 / NBRC 15755 / NCIMB 13165 / 161)).